A 61-amino-acid polypeptide reads, in one-letter code: Small ribosomal subunit protein uS14 (61 aa).

Positions 24, 27, 40, and 43 each coordinate Zn(2+).

The protein belongs to the universal ribosomal protein uS14 family. Zinc-binding uS14 subfamily. As to quaternary structure, part of the 30S ribosomal subunit. Contacts proteins S3 and S10. The cofactor is Zn(2+).

Its function is as follows. Binds 16S rRNA, required for the assembly of 30S particles and may also be responsible for determining the conformation of the 16S rRNA at the A site. The protein is Small ribosomal subunit protein uS14 of Deinococcus deserti (strain DSM 17065 / CIP 109153 / LMG 22923 / VCD115).